A 143-amino-acid polypeptide reads, in one-letter code: Large ribosomal subunit protein mL51 (143 aa).

A mitochondrion-targeting transit peptide spans 1–52 (MAALVRGLMRRVAALPQAVRSVSGGGQRHEPYRPLPITSPLAGLPRNFRVRE).

Belongs to the mitochondrion-specific ribosomal protein mL51 family. In terms of assembly, component of the mitochondrial ribosome large subunit (39S) which comprises a 16S rRNA and about 50 distinct proteins.

The protein localises to the mitochondrion. The sequence is that of Large ribosomal subunit protein mL51 (MRPL51) from Gallus gallus (Chicken).